Consider the following 846-residue polypeptide: Vinculin (846 aa).

The tract at residues 1–257 (MPVKFHTKTL…VLQLTTTFEE (257 aa)) is interaction with TLN. A coiled-coil region spans residues 315–370 (RAKLLAAADELDQILKELEELQAKGLGDSRQARALAHAAAVKLQELEQEIRKALAE). The segment at 617-646 (WVPPRPPLPELEEEEEPPELPPPPEDPASL) is disordered.

Belongs to the vinculin/alpha-catenin family. Monomer. Interacts with TLN (talin); the interaction facilitates VIN1 binding to F-actin. In terms of tissue distribution, expressed in epithelial tissues, specifically the pinacoderm (outer epithelium) and choanoderm (feeding epithelium) (at protein level). Also detected in migratory cells of the mesohyl (at protein level).

It localises to the cytoplasm. It is found in the cell cortex. Its subcellular location is the cell projection. The protein localises to the filopodium. The protein resides in the cytoskeleton. Its function is as follows. Actin filament (F-actin)-binding protein which may play a role in cell-cell adhesion. The polypeptide is Vinculin (Oscarella pearsei (Sponge)).